The following is a 228-amino-acid chain: Triosephosphate isomerase (228 aa).

A substrate-binding site is contributed by 11–13 (NFK). The active-site Electrophile is histidine 95. Glutamate 143 functions as the Proton acceptor in the catalytic mechanism. Substrate contacts are provided by residues isoleucine 148, glycine 183, and 204–205 (AS).

It belongs to the triosephosphate isomerase family. Homotetramer; dimer of dimers.

The protein resides in the cytoplasm. It carries out the reaction D-glyceraldehyde 3-phosphate = dihydroxyacetone phosphate. The protein operates within carbohydrate biosynthesis; gluconeogenesis. Its pathway is carbohydrate degradation; glycolysis; D-glyceraldehyde 3-phosphate from glycerone phosphate: step 1/1. In terms of biological role, involved in the gluconeogenesis. Catalyzes stereospecifically the conversion of dihydroxyacetone phosphate (DHAP) to D-glyceraldehyde-3-phosphate (G3P). This is Triosephosphate isomerase from Pyrococcus abyssi (strain GE5 / Orsay).